A 186-amino-acid polypeptide reads, in one-letter code: ATP synthase subunit delta (186 aa).

This sequence belongs to the ATPase delta chain family. In terms of assembly, F-type ATPases have 2 components, F(1) - the catalytic core - and F(0) - the membrane proton channel. F(1) has five subunits: alpha(3), beta(3), gamma(1), delta(1), epsilon(1). F(0) has three main subunits: a(1), b(2) and c(10-14). The alpha and beta chains form an alternating ring which encloses part of the gamma chain. F(1) is attached to F(0) by a central stalk formed by the gamma and epsilon chains, while a peripheral stalk is formed by the delta and b chains.

It localises to the cell inner membrane. Its function is as follows. F(1)F(0) ATP synthase produces ATP from ADP in the presence of a proton or sodium gradient. F-type ATPases consist of two structural domains, F(1) containing the extramembraneous catalytic core and F(0) containing the membrane proton channel, linked together by a central stalk and a peripheral stalk. During catalysis, ATP synthesis in the catalytic domain of F(1) is coupled via a rotary mechanism of the central stalk subunits to proton translocation. In terms of biological role, this protein is part of the stalk that links CF(0) to CF(1). It either transmits conformational changes from CF(0) to CF(1) or is implicated in proton conduction. This chain is ATP synthase subunit delta, found in Chelativorans sp. (strain BNC1).